The following is a 144-amino-acid chain: Large ribosomal subunit protein uL16 (144 aa).

Residues 1–19 (MLLPKRVKYRRQHRPKTTG) are compositionally biased toward basic residues. Residues 1–23 (MLLPKRVKYRRQHRPKTTGRSKG) are disordered.

This sequence belongs to the universal ribosomal protein uL16 family. In terms of assembly, part of the 50S ribosomal subunit.

In terms of biological role, binds 23S rRNA and is also seen to make contacts with the A and possibly P site tRNAs. The protein is Large ribosomal subunit protein uL16 of Staphylococcus saprophyticus subsp. saprophyticus (strain ATCC 15305 / DSM 20229 / NCIMB 8711 / NCTC 7292 / S-41).